A 289-amino-acid polypeptide reads, in one-letter code: tRNA pseudouridine synthase A (289 aa).

Residue Asp67 is the Nucleophile of the active site. Residue Tyr125 coordinates substrate.

The protein belongs to the tRNA pseudouridine synthase TruA family. Homodimer.

It carries out the reaction uridine(38/39/40) in tRNA = pseudouridine(38/39/40) in tRNA. Its function is as follows. Formation of pseudouridine at positions 38, 39 and 40 in the anticodon stem and loop of transfer RNAs. This is tRNA pseudouridine synthase A from Prochlorococcus marinus (strain MIT 9211).